We begin with the raw amino-acid sequence, 764 residues long: Polymeric immunoglobulin receptor (764 aa).

A signal peptide spans 1–18; sequence MLLFVLTCLLAVFPAIST. In terms of domain architecture, Ig-like V-type 1; required for binding to polymeric IgA and IgM spans 19–120; it reads KSPIFGPEEV…GLGINSRGLS (102 aa). The Extracellular segment spans residues 19–638; that stretch reads KSPIFGPEEV…SSEEQGGSSR (620 aa). Intrachain disulfides connect cysteine 40-cysteine 110 and cysteine 56-cysteine 64. Asparagine 83, asparagine 90, asparagine 135, and asparagine 186 each carry an N-linked (GlcNAc...) asparagine glycan. Ig-like V-type domains follow at residues 145–237, 250–352, 364–458, and 462–561; these read GRTV…DLQV, RGSV…ESTI, GGSV…IKII, and PNLK…VYVA. 5 disulfides stabilise this stretch: cysteine 152–cysteine 220, cysteine 257–cysteine 325, cysteine 271–cysteine 279, cysteine 371–cysteine 441, and cysteine 385–cysteine 395. N-linked (GlcNAc...) asparagine glycosylation is present at asparagine 421. N-linked (GlcNAc...) (complex) asparagine glycosylation is present at asparagine 469. 3 disulfides stabilise this stretch: cysteine 482/cysteine 544, cysteine 486/cysteine 520, and cysteine 496/cysteine 503. N-linked (GlcNAc...) asparagine glycosylation occurs at asparagine 499. A compositionally biased stretch (basic and acidic residues) spans 609–619; that stretch reads KAVADTRDQAD. The disordered stretch occupies residues 609 to 637; that stretch reads KAVADTRDQADGSRASVDSGSSEEQGGSS. Low complexity predominate over residues 627–637; sequence SGSSEEQGGSS. A helical transmembrane segment spans residues 639 to 661; the sequence is ALVSTLVPLGLVLAVGAVAVGVA. Residues 662 to 764 lie on the Cytoplasmic side of the membrane; the sequence is RARHRKNVDR…AEAQDGPQEA (103 aa). Phosphoserine occurs at positions 673, 682, 689, and 735. The disordered stretch occupies residues 717–738; the sequence is ATTESTTETKEPKKAKRSSKEE. Residues 723 to 738 show a composition bias toward basic and acidic residues; it reads TETKEPKKAKRSSKEE.

Interacts (mainly via CDR1-like domain) with dimeric IgA. Interacts (mainly via CDR2-like domain) with pentameric IgM. In terms of assembly, either free or part of the secretory IgA (sIgA) complex that consists of two, four or five IgA monomers, and two additional non-Ig polypeptides, namely the JCHAIN and the secretory component (the proteolytic product of PIGR). Free secretory component interacts with bacterial antigens toxA of C.difficile and eaeA of E.coli. N-glycosylated. N-glycosylation is required for anchoring IgA molecules to mucus, but is not necessary for Ig binding.

Its subcellular location is the cell membrane. The protein localises to the secreted. Mediates selective transcytosis of polymeric IgA and IgM across mucosal epithelial cells. Binds polymeric IgA and IgM at the basolateral surface of epithelial cells. The complex is then transported across the cell to be secreted at the apical surface. During this process, a cleavage occurs that separates the extracellular (known as the secretory component) from the transmembrane segment. Its function is as follows. Through its N-linked glycans ensures anchoring of secretory IgA (sIgA) molecules to mucus lining the epithelial surface to neutralize extracellular pathogens. On its own (free form) may act as a non-specific microbial scavenger to prevent pathogen interaction with epithelial cells. The sequence is that of Polymeric immunoglobulin receptor (PIGR) from Homo sapiens (Human).